Here is a 173-residue protein sequence, read N- to C-terminus: NADH-ubiquinone oxidoreductase chain 6 (173 aa).

A run of 5 helical transmembrane segments spans residues 1–21 (MTYF…AVAS), 25–45 (PYFA…VLVG), 53–73 (LVLF…SAAL), 87–107 (VLGY…FFWG), and 141–161 (GGML…VLEL).

It belongs to the complex I subunit 6 family.

The protein localises to the mitochondrion membrane. It carries out the reaction a ubiquinone + NADH + 5 H(+)(in) = a ubiquinol + NAD(+) + 4 H(+)(out). Functionally, core subunit of the mitochondrial membrane respiratory chain NADH dehydrogenase (Complex I) that is believed to belong to the minimal assembly required for catalysis. Complex I functions in the transfer of electrons from NADH to the respiratory chain. The immediate electron acceptor for the enzyme is believed to be ubiquinone. The sequence is that of NADH-ubiquinone oxidoreductase chain 6 (MT-ND6) from Carassius auratus (Goldfish).